The chain runs to 387 residues: F-box/LRR-repeat/kelch-repeat protein At2g29770 (387 aa).

Residues 1-34 (MVFISETSDDGSNGGDPTKNPQEEEEENLPPIPQ) form a disordered region. The region spanning 31 to 78 (PIPQGIPDELIESTVLLIRRCHYPTLSLLSKTFRRVISSSELYKSRFI) is the F-box domain. The LRR 1 repeat unit spans residues 105–128 (CNIPRNISLHLREIKSLPPLNHGS). Kelch repeat units lie at residues 136–183 (HMYV…VIDG) and 184–231 (RIYV…FVTS). An LRR 2 repeat occupies 196–219 (DHWIEVFDIENRIWSSVPHHRYCN).

In Arabidopsis thaliana (Mouse-ear cress), this protein is F-box/LRR-repeat/kelch-repeat protein At2g29770.